Consider the following 85-residue polypeptide: Toxin BmKITc (85 aa).

A signal peptide spans M1–A21. In terms of domain architecture, LCN-type CS-alpha/beta spans D22–G82. 4 disulfide bridges follow: C31-C81, C35-C56, C42-C63, and C46-C65.

It belongs to the long (4 C-C) scorpion toxin superfamily. Sodium channel inhibitor family. Beta subfamily. In terms of tissue distribution, expressed by the venom gland.

The protein resides in the secreted. Depressant insect beta-toxins cause a transient contraction paralysis followed by a slow flaccid paralysis. They bind voltage-independently at site-4 of sodium channels (Nav) and shift the voltage of activation toward more negative potentials thereby affecting sodium channel activation and promoting spontaneous and repetitive firing. The sequence is that of Toxin BmKITc from Olivierus martensii (Manchurian scorpion).